Reading from the N-terminus, the 1407-residue chain is DNA-directed RNA polymerase subunit beta' (1407 aa).

The Zn(2+) site is built by Cys-70, Cys-72, Cys-85, and Cys-88. Residues Asp-460, Asp-462, and Asp-464 each contribute to the Mg(2+) site. Cys-814, Cys-888, Cys-895, and Cys-898 together coordinate Zn(2+).

Belongs to the RNA polymerase beta' chain family. In terms of assembly, the RNAP catalytic core consists of 2 alpha, 1 beta, 1 beta' and 1 omega subunit. When a sigma factor is associated with the core the holoenzyme is formed, which can initiate transcription. Mg(2+) serves as cofactor. Requires Zn(2+) as cofactor.

The catalysed reaction is RNA(n) + a ribonucleoside 5'-triphosphate = RNA(n+1) + diphosphate. Functionally, DNA-dependent RNA polymerase catalyzes the transcription of DNA into RNA using the four ribonucleoside triphosphates as substrates. The sequence is that of DNA-directed RNA polymerase subunit beta' from Citrobacter koseri (strain ATCC BAA-895 / CDC 4225-83 / SGSC4696).